Consider the following 412-residue polypeptide: Serine hydroxymethyltransferase (412 aa).

(6S)-5,6,7,8-tetrahydrofolate is bound by residues Leu-117 and Gly-121–Leu-123. Residue Lys-226 is modified to N6-(pyridoxal phosphate)lysine. (6S)-5,6,7,8-tetrahydrofolate-binding positions include Glu-242 and Ser-350–Phe-352.

It belongs to the SHMT family. In terms of assembly, homodimer. Pyridoxal 5'-phosphate serves as cofactor.

The protein resides in the cytoplasm. The catalysed reaction is (6R)-5,10-methylene-5,6,7,8-tetrahydrofolate + glycine + H2O = (6S)-5,6,7,8-tetrahydrofolate + L-serine. It functions in the pathway one-carbon metabolism; tetrahydrofolate interconversion. The protein operates within amino-acid biosynthesis; glycine biosynthesis; glycine from L-serine: step 1/1. Catalyzes the reversible interconversion of serine and glycine with tetrahydrofolate (THF) serving as the one-carbon carrier. Also exhibits THF-independent aldolase activity toward beta-hydroxyamino acids, producing glycine and aldehydes, via a retro-aldol mechanism. The protein is Serine hydroxymethyltransferase of Methanosarcina acetivorans (strain ATCC 35395 / DSM 2834 / JCM 12185 / C2A).